Here is a 579-residue protein sequence, read N- to C-terminus: Transcription factor MTB2 (579 aa).

The disordered stretch occupies residues 373–439 (GGMQIDFTNS…PLNHVEAERQ (67 aa)). The segment covering 382–392 (SRPVVSPVPTV) has biased composition (low complexity). 2 stretches are compositionally biased toward basic and acidic residues: residues 393 to 415 (ESEH…DERR) and 425 to 439 (NGRE…AERQ). Residues 428-441 (EEPLNHVEAERQRR) are basic motif; degenerate. The bHLH domain occupies 428–477 (EEPLNHVEAERQRREKLNQRFYALRAVVPNISKMDKASLLGDAIAHITDM). Residues 442 to 477 (EKLNQRFYALRAVVPNISKMDKASLLGDAIAHITDM) form a helix-loop-helix motif region.

Its subcellular location is the nucleus. Its function is as follows. Transcription factor that negatively regulates jasmonate (JA) signaling. Negatively regulates JA-dependent response to wounding, JA-induced expression of defense genes, JA-dependent responses against herbivorous insects, and JA-dependent resistance against Botrytis cinerea infection. Plays a positive role in resistance against the bacterial pathogen Pseudomonas syringae pv tomato DC3000. This is Transcription factor MTB2 from Solanum lycopersicum (Tomato).